The following is a 50-amino-acid chain: Mast cell degranulating peptide (50 aa).

The first 27 residues, 1 to 27, serve as a signal peptide directing secretion; it reads MISMLRCTFFFLSVILITSYFVTPTMS. Lys29 bears the N6-formyllysine; partial mark. 2 disulfide bridges follow: Cys30–Cys42 and Cys32–Cys46. N6-formyllysine; partial is present on residues Lys44 and Lys48. The residue at position 49 (Asn49) is an Asparagine amide.

As to expression, expressed by the venom gland.

The protein localises to the secreted. Potent anti-inflammatory agent. At low concentrations, mediates the degranulation of mast cells thus evoking an inflammatory response. Also acts as a neurotoxin capable of blocking a class of voltage-gated potassium channels. This is Mast cell degranulating peptide from Apis mellifera (Honeybee).